A 120-amino-acid polypeptide reads, in one-letter code: Large ribosomal subunit protein uL22 (120 aa).

This sequence belongs to the universal ribosomal protein uL22 family. As to quaternary structure, part of the 50S ribosomal subunit.

Functionally, this protein binds specifically to 23S rRNA; its binding is stimulated by other ribosomal proteins, e.g. L4, L17, and L20. It is important during the early stages of 50S assembly. It makes multiple contacts with different domains of the 23S rRNA in the assembled 50S subunit and ribosome. The globular domain of the protein is located near the polypeptide exit tunnel on the outside of the subunit, while an extended beta-hairpin is found that lines the wall of the exit tunnel in the center of the 70S ribosome. The protein is Large ribosomal subunit protein uL22 of Corynebacterium diphtheriae (strain ATCC 700971 / NCTC 13129 / Biotype gravis).